The chain runs to 544 residues: Serine/threonine-protein kinase PAK 1 (544 aa).

The interval Met-1 to Ser-79 is disordered. N-acetylserine is present on Ser-2. A Phosphoserine; by PKB and autocatalysis modification is found at Ser-21. At Ser-57 the chain carries Phosphoserine; by autocatalysis. Over residues Lys-68–Ser-79 the composition is skewed to basic and acidic residues. An autoregulatory region region spans residues Lys-70 to Gln-140. The region spanning Ile-75–Gly-88 is the CRIB domain. The segment at Ile-75–Arg-105 is GTPase-binding. Thr-84 carries the phosphothreonine; by OXSR1 modification. Ser-115 bears the Phosphoserine mark. Phosphotyrosine occurs at positions 131 and 142. Residues Ser-144 and Ser-149 each carry the phosphoserine; by autocatalysis modification. Polar residues predominate over residues Ala-150–Glu-166. The segment at Ala-150–His-195 is disordered. Tyr-153 is modified (phosphotyrosine; by JAK2). Ser-174 carries the phosphoserine modification. Residues Ser-174–Ala-183 show a composition bias toward acidic residues. At Thr-184 the chain carries Phosphothreonine. Phosphoserine; by autocatalysis is present on Ser-198. At Tyr-200 the chain carries Phosphotyrosine; by JAK2. Ser-203 bears the Phosphoserine; by autocatalysis mark. The segment at Pro-209 to Glu-250 is disordered. Phosphothreonine is present on residues Thr-211 and Thr-218. Ser-219 and Ser-222 each carry phosphoserine. Positions Ser-219 to Pro-230 are enriched in polar residues. Residues Thr-224, Thr-228, and Thr-229 each carry the phosphothreonine modification. The Protein kinase domain maps to Tyr-269–Leu-520. Ile-275–Val-283 is an ATP binding site. Tyr-284 is modified (phosphotyrosine; by JAK2). Position 298 (Lys-298) interacts with ATP. Asp-388 serves as the catalytic Proton acceptor. The residue at position 422 (Thr-422) is a Phosphothreonine; by autocatalysis, BRSK2 and PDPK1.

Belongs to the protein kinase superfamily. STE Ser/Thr protein kinase family. STE20 subfamily. In terms of assembly, homodimer in its autoinhibited state. Active as monomer. Interacts with GIT1. Component of cytoplasmic complexes, which also contains PXN, ARHGEF7 and GIT1. Interacts with NISCH. Interacts with DVL1; mediates the formation of a DVL1, MUSK and PAK1 ternary complex involved in AChR clustering. Binds to the caspase-cleaved p110 isoform of CDC2L1 and CDC2L2, p110C, but not the full-length proteins. Interacts with ARHGEF7. Interacts with SCRIB. Interacts with PDPK1. Interacts (via kinase domain) with RAF1. Interacts with NCK1 and NCK2. Interacts with TBCB. Interacts with BRSK2. Interacts tightly with GTP-bound but not GDP-bound CDC42/P21 and RAC1. Interacts with SNAI1. Interacts with CIB1 (via N-terminal region); the interaction is direct, promotes PAK1 activity and occurs in a calcium-dependent manner. Interacts with INPP5K. Interacts with gamma-tubulin. Interacts with RHOU; the interaction promotes PAK1 activation. Requires Mg(2+) as cofactor. Autophosphorylated in trans, meaning that in a dimer, one kinase molecule phosphorylates the other one. Activated by autophosphorylation at Thr-422 in response to a conformation change, triggered by interaction with GTP-bound CDC42 or RAC1. Activated by phosphorylation at Thr-422 by PDPK1. Phosphorylated by JAK2 in response to PRL; this increases PAK1 kinase activity. Phosphorylated at Ser-21 by PKB/AKT; this reduces interaction with NCK1 and association with focal adhesion sites. Activated by phosphorylation at Thr-422 by BRSK2. Upon DNA damage, phosphorylated at Thr-211 and translocates to the nucleoplasm. Phosphorylated at tyrosine residues, which can be enhanced by NTN1. In terms of tissue distribution, expressed predominantly in the brain, with higher expression in neuronal groups associated with motor function, and at lower levels in the spleen.

It localises to the cytoplasm. It is found in the cell junction. The protein resides in the focal adhesion. Its subcellular location is the cell projection. The protein localises to the lamellipodium. It localises to the cell membrane. It is found in the ruffle membrane. The protein resides in the invadopodium. Its subcellular location is the nucleus. The protein localises to the nucleoplasm. It localises to the chromosome. It is found in the cytoskeleton. The protein resides in the microtubule organizing center. Its subcellular location is the centrosome. It carries out the reaction L-seryl-[protein] + ATP = O-phospho-L-seryl-[protein] + ADP + H(+). The catalysed reaction is L-threonyl-[protein] + ATP = O-phospho-L-threonyl-[protein] + ADP + H(+). Its activity is regulated as follows. Phosphorylation of Thr-84 by OXSR1 inhibits activation. Activated by binding small G proteins. Binding of GTP-bound CDC42 or RAC1 to the autoregulatory region releases monomers from the autoinhibited dimer, and enables activation by phosphorylation of Thr-422. Functionally, protein kinase involved in intracellular signaling pathways downstream of integrins and receptor-type kinases that plays an important role in cytoskeleton dynamics, in cell adhesion, migration, proliferation, apoptosis, mitosis, and in vesicle-mediated transport processes. Can directly phosphorylate BAD and protects cells against apoptosis. Activated by interaction with CDC42 and RAC1. Functions as a GTPase effector that links the Rho-related GTPases CDC42 and RAC1 to the JNK MAP kinase pathway. Phosphorylates and activates MAP2K1, and thereby mediates activation of downstream MAP kinases. Involved in the reorganization of the actin cytoskeleton, actin stress fibers and of focal adhesion complexes. Phosphorylates the tubulin chaperone TBCB and thereby plays a role in the regulation of microtubule biogenesis and organization of the tubulin cytoskeleton. Plays a role in the regulation of insulin secretion in response to elevated glucose levels. Part of a ternary complex that contains PAK1, DVL1 and MUSK that is important for MUSK-dependent regulation of AChR clustering during the formation of the neuromuscular junction (NMJ). Activity is inhibited in cells undergoing apoptosis, potentially due to binding of CDC2L1 and CDC2L2. Phosphorylates MYL9/MLC2. Phosphorylates RAF1 at 'Ser-338' and 'Ser-339' resulting in: activation of RAF1, stimulation of RAF1 translocation to mitochondria, phosphorylation of BAD by RAF1, and RAF1 binding to BCL2. Phosphorylates SNAI1 at 'Ser-246' promoting its transcriptional repressor activity by increasing its accumulation in the nucleus. In podocytes, promotes NR3C2 nuclear localization. Required for atypical chemokine receptor ACKR2-induced phosphorylation of LIMK1 and cofilin (CFL1) and for the up-regulation of ACKR2 from endosomal compartment to cell membrane, increasing its efficiency in chemokine uptake and degradation. In synapses, seems to mediate the regulation of F-actin cluster formation performed by SHANK3, maybe through CFL1 phosphorylation and inactivation. Plays a role in RUFY3-mediated facilitating gastric cancer cells migration and invasion. In response to DNA damage, phosphorylates MORC2 which activates its ATPase activity and facilitates chromatin remodeling. In neurons, plays a crucial role in regulating GABA(A) receptor synaptic stability and hence GABAergic inhibitory synaptic transmission through its role in F-actin stabilization. In hippocampal neurons, necessary for the formation of dendritic spines and excitatory synapses; this function is dependent on kinase activity and may be exerted by the regulation of actomyosin contractility through the phosphorylation of myosin II regulatory light chain (MLC). Along with GIT1, positively regulates microtubule nucleation during interphase. Phosphorylates FXR1, promoting its localization to stress granules and activity. Phosphorylates ILK on 'Thr-173' and 'Ser-246', promoting nuclear export of ILK. The chain is Serine/threonine-protein kinase PAK 1 from Rattus norvegicus (Rat).